We begin with the raw amino-acid sequence, 188 residues long: Large ribosomal subunit protein eL18 (188 aa).

K119 is covalently cross-linked (Glycyl lysine isopeptide (Lys-Gly) (interchain with G-Cter in SUMO2)). Phosphoserine is present on S130. The interval 151–188 (HFGKAPGTPHSHTKPYVRSKGRKFERARGRRASRGYKN) is disordered. T158 is modified (phosphothreonine). Composition is skewed to basic residues over residues 161-171 (SHTKPYVRSKG) and 178-188 (RGRRASRGYKN). K164 is covalently cross-linked (Glycyl lysine isopeptide (Lys-Gly) (interchain with G-Cter in SUMO2)).

It belongs to the eukaryotic ribosomal protein eL18 family. As to quaternary structure, component of the large ribosomal subunit.

It localises to the cytoplasm. The protein resides in the cytosol. The protein localises to the rough endoplasmic reticulum. Component of the large ribosomal subunit. The ribosome is a large ribonucleoprotein complex responsible for the synthesis of proteins in the cell. In Homo sapiens (Human), this protein is Large ribosomal subunit protein eL18 (RPL18).